A 257-amino-acid polypeptide reads, in one-letter code: Acetylglutamate kinase (257 aa).

Substrate is bound by residues 43–44 (GG), R65, and N157. ATP-binding positions include 180–185 (DVSGIL) and 208–210 (IIT).

The protein belongs to the acetylglutamate kinase family. ArgB subfamily. Homodimer.

It is found in the cytoplasm. It carries out the reaction N-acetyl-L-glutamate + ATP = N-acetyl-L-glutamyl 5-phosphate + ADP. It participates in amino-acid biosynthesis; L-arginine biosynthesis; N(2)-acetyl-L-ornithine from L-glutamate: step 2/4. Functionally, catalyzes the ATP-dependent phosphorylation of N-acetyl-L-glutamate. The chain is Acetylglutamate kinase from Salmonella schwarzengrund (strain CVM19633).